A 253-amino-acid polypeptide reads, in one-letter code: Nurim homolog (253 aa).

Over 1–2 (MA) the chain is Nuclear. The helical transmembrane segment at 3-30 (TFAKVMLLLSSVATFGYTFFVVGKLMLF) threads the bilayer. Residues 31–56 (LSTPRSISKAHTWIFNLLDNKSRLET) lie on the Perinuclear space side of the membrane. Residues 57–78 (AYGPIVFDTLYLIGFIFQHSFL) traverse the membrane as a helical segment. The Nuclear portion of the chain corresponds to 79-96 (KSALVKNLWRKLGLAAAE). A helical membrane pass occupies residues 97–113 (RTIYSLTSSICLHYLLK). Residues 114–132 (NWLPAQSIVLWQVDVDESA) lie on the Perinuclear space side of the membrane. The helical transmembrane segment at 133–161 (PLWWTFVVTHGLGWAVIFGGSLIMDLPEL) threads the bilayer. The Nuclear portion of the chain corresponds to 162 to 188 (LGVKQVYYDLKEYGEPVAYKSSELRNL). The helical transmembrane segment at 189 to 207 (YSHVRHPSFVGLSVILFAT) threads the bilayer. Topologically, residues 208 to 213 (NVMSLD) are perinuclear space. Residues 214-231 (RLLLASLLTVYMYVAWST) form a helical membrane-spanning segment. Residues 232-253 (DDKDVAYQKQQLRNKKHELKAQ) lie on the Nuclear side of the membrane.

This sequence belongs to the nurim family.

The protein resides in the nucleus inner membrane. The sequence is that of Nurim homolog (nrm) from Drosophila pseudoobscura pseudoobscura (Fruit fly).